Reading from the N-terminus, the 423-residue chain is Anthranilate 1,2-dioxygenase large subunit (423 aa).

In terms of domain architecture, Rieske spans 53-168 (WNFVALEAEI…VDSYRGLVFA (116 aa)). [2Fe-2S] cluster is bound by residues C95, H97, C115, and H118. Positions 223, 228, and 370 each coordinate Fe cation.

This sequence belongs to the bacterial ring-hydroxylating dioxygenase alpha subunit family. Part of a multicomponent enzyme system composed of a reductase (AndAa), a ferredoxin (AndAb) and a two-subunit oxygenase component (AndAc and AndAd). It depends on Fe cation as a cofactor. The cofactor is [2Fe-2S] cluster.

It catalyses the reaction anthranilate + NADH + O2 + 3 H(+) = catechol + NH4(+) + CO2 + NAD(+). The catalysed reaction is anthranilate + NADPH + O2 + 3 H(+) = catechol + NH4(+) + CO2 + NADP(+). The protein operates within aromatic compound metabolism; anthranilate degradation via hydroxylation; catechol from anthranilate: step 1/1. Its function is as follows. Oxygenase component of anthranilate dioxygenase multicomponent enzyme system which catalyzes the incorporation of both atoms of molecular oxygen into anthranilate to form catechol. Can also act on benzoate and salicylate but not on 2-chlorobenzoate or o-toluate. The chain is Anthranilate 1,2-dioxygenase large subunit from Burkholderia cepacia (Pseudomonas cepacia).